Consider the following 852-residue polypeptide: Potassium voltage-gated channel subfamily KQT member 2 (852 aa).

The Cytoplasmic segment spans residues 1 to 90; it reads MVQKSRNGGV…LYNVLERPRG (90 aa). Ser-52 is modified (phosphoserine; by PKA). The helical transmembrane segment at 91-113 threads the bilayer; the sequence is WAFIYHAYVFLLVFSCLVLSVFS. Topologically, residues 114-123 are extracellular; it reads TIKEYEKSSE. Residues 124–145 traverse the membrane as a helical segment; that stretch reads GALYILEIVTIVVFGVEYFVRI. Topologically, residues 146 to 163 are cytoplasmic; sequence WAAGCCCRYRGWRGRLKF. A helical transmembrane segment spans residues 164–183; it reads ARKPFCVIDIMVLIASIAVL. The Extracellular segment spans residues 184 to 196; the sequence is AAGSQGNVFATSA. A helical; Voltage-sensor membrane pass occupies residues 197-215; sequence LRSLRFLQILRMIRMDRRG. Arg-214 is a binding site for a 1,2-diacyl-sn-glycero-3-phospho-(1D-myo-inositol-4,5-bisphosphate). At 216–227 the chain is on the cytoplasmic side; that stretch reads GTWKLLGSVVYA. Residues 222–323 are mediates interaction with SLC5A3; the sequence is GSVVYAHSKE…SGFALKVQEQ (102 aa). Residues 228-253 form a helical membrane-spanning segment; that stretch reads HSKELVTAWYIGFLCLILASFLVYLA. Lys-230 provides a ligand contact to a 1,2-diacyl-sn-glycero-3-phospho-(1D-myo-inositol-4,5-bisphosphate). Topologically, residues 254–263 are extracellular; it reads EKGENDHFDT. Positions 264–276 form an intramembrane region, pore-forming; the sequence is YADALWWGLITLT. The Selectivity filter signature appears at 277 to 282; that stretch reads TIGYGD. The Extracellular segment spans residues 277–287; that stretch reads TIGYGDKYPQT. The helical transmembrane segment at 288–314 threads the bilayer; it reads WNGRLLAATFTLIGVSFFALPAGILGS. Over 315-852 the chain is Cytoplasmic; that stretch reads GFALKVQEQH…GDVAWAGPRK (538 aa). The interval 317–522 is mediates interaction with calmodulin; sequence ALKVQEQHRQ…EDLTPGLKVS (206 aa). A 1,2-diacyl-sn-glycero-3-phospho-(1D-myo-inositol-4,5-bisphosphate) is bound at residue Lys-327. The tract at residues 404 to 469 is disordered; it reads TFRKEPQPEP…SKVPKSWSFG (66 aa). The segment covering 440–457 has biased composition (polar residues); sequence PQAQTVRRSPSADQSLDD. Phosphoserine is present on residues Ser-448, Ser-450, Ser-454, Ser-458, Ser-460, and Ser-489. 3 disordered regions span residues 579-601, 643-662, and 672-718; these read GPTI…EDPS, GAKE…SRDH, and IVRS…DHGS. Positions 583 to 592 are enriched in basic and acidic residues; the sequence is TDKDRTKGPA. Ser-655 is modified (phosphoserine). A phosphoserine mark is found at Ser-781 and Ser-783. The tract at residues 818–852 is disordered; sequence ESDTDSDLCTPCGPPPRSATGEGPFGDVAWAGPRK.

It belongs to the potassium channel family. KQT (TC 1.A.1.15) subfamily. Kv7.2/KCNQ2 sub-subfamily. Heterotetramer with KCNQ3; forms heterotetrameric M-channel responsible for the M-current. Homotetrameric; forms a functional homotetrameric channel resulting in the expression of a small M-current. Interacts with calmodulin; the interaction is calcium-independent, constitutive and participates in the proper assembly of a functional M-channel. May associate with KCNE2. Interacts with IQCJ-SCHIP1. Interacts (via the pore module) with SLC5A3/SMIT1; forms a coregulatory complex that alters ion selectivity, voltage dependence and gating kinetics of the channel. Interacts with AKAP5; the interaction may help KCNQ2 channel complex to retain calcium-bound calmodulin. In terms of processing, KCNQ2/KCNQ3 heteromeric current can be increased by intracellular cyclic AMP, an effect that depends on phosphorylation of Ser-52 in the N-terminal region. KCNQ2/KCNQ3 are ubiquitinated by NEDD4L. Ubiquitination leads to protein degradation. Degradation induced by NEDD4L is inhibited by USP36. Expressed in brain and sympathetic ganglia. In brain, expressed in cortex, hippocampus, and cerebellum. In sympathetic ganglia, expressed at lower levels in celiac ganglia and superior mesenteric ganglia than in superior cervical ganglia.

The protein resides in the cell membrane. The enzyme catalyses K(+)(in) = K(+)(out). It carries out the reaction Rb(+)(in) = Rb(+)(out). The catalysed reaction is Cs(+)(in) = Cs(+)(out). It catalyses the reaction Na(+)(in) = Na(+)(out). Its activity is regulated as follows. Phosphatidylinositol-4,5-bisphosphate (PIP2) potentiates the activation of KCNQ channels by enhancing the electro-mechanical coupling of the voltage-sensing domain (VSD) and the pore-forming domain (PD). In the closed state of the channel, PIP2 is anchored at the S2-S3 loop; upon channel activation, PIP2 interacts with the S4-S5 linker and is involved in channel gating. Calcium suppresses KCNQ2 and KCNQ2-KCNQ3 channel currents, with calcium-bound calmodulin inducing a change in channel configuration which leads to the reduction of channel affinity for PIP2 and subsequent current suppression. In terms of biological role, pore-forming subunit of the voltage-gated potassium (Kv) M-channel which is responsible for the M-current, a key controller of neuronal excitability. M-channel is composed of pore-forming subunits KCNQ2 and KCNQ3 assembled as heterotetramers. The native M-current has a slowly activating and deactivating potassium conductance which plays a critical role in determining the subthreshold electrical excitability of neurons as well as the responsiveness to synaptic inputs. M-channel is selectively permeable in vitro to other cations besides potassium, in decreasing order of affinity K(+) &gt; Rb(+) &gt; Cs(+) &gt; Na(+). M-channel association with SLC5A3/SMIT1 alters channel ion selectivity, increasing Na(+) and Cs(+) permeation relative to K(+). Suppressed by activation of the muscarinic acetylcholine receptor CHRM1. The chain is Potassium voltage-gated channel subfamily KQT member 2 from Rattus norvegicus (Rat).